Here is a 243-residue protein sequence, read N- to C-terminus: Probable transcriptional regulatory protein TTE1135 (243 aa).

This sequence belongs to the TACO1 family.

The protein localises to the cytoplasm. The chain is Probable transcriptional regulatory protein TTE1135 from Caldanaerobacter subterraneus subsp. tengcongensis (strain DSM 15242 / JCM 11007 / NBRC 100824 / MB4) (Thermoanaerobacter tengcongensis).